The primary structure comprises 663 residues: Putative glucosamine-6-phosphate deaminase-like protein BT_0258 (663 aa).

The segment at 1-290 (MKTNLSSQIT…NLTRIQRPWL (290 aa)) is glucosamine-6-phosphate deaminase-like. Residue E184 is part of the active site.

The protein in the N-terminal section; belongs to the glucosamine/galactosamine-6-phosphate isomerase family. NagB subfamily.

The sequence is that of Putative glucosamine-6-phosphate deaminase-like protein BT_0258 from Bacteroides thetaiotaomicron (strain ATCC 29148 / DSM 2079 / JCM 5827 / CCUG 10774 / NCTC 10582 / VPI-5482 / E50).